Consider the following 332-residue polypeptide: Lipoyl synthase (332 aa).

Positions 55, 60, 66, 81, 85, 88, and 292 each coordinate [4Fe-4S] cluster. One can recognise a Radical SAM core domain in the interval 67–281 (WEDREATFLI…SDEAERIGFL (215 aa)).

This sequence belongs to the radical SAM superfamily. Lipoyl synthase family. [4Fe-4S] cluster serves as cofactor.

It is found in the cytoplasm. The catalysed reaction is [[Fe-S] cluster scaffold protein carrying a second [4Fe-4S](2+) cluster] + N(6)-octanoyl-L-lysyl-[protein] + 2 oxidized [2Fe-2S]-[ferredoxin] + 2 S-adenosyl-L-methionine + 4 H(+) = [[Fe-S] cluster scaffold protein] + N(6)-[(R)-dihydrolipoyl]-L-lysyl-[protein] + 4 Fe(3+) + 2 hydrogen sulfide + 2 5'-deoxyadenosine + 2 L-methionine + 2 reduced [2Fe-2S]-[ferredoxin]. It participates in protein modification; protein lipoylation via endogenous pathway; protein N(6)-(lipoyl)lysine from octanoyl-[acyl-carrier-protein]: step 2/2. In terms of biological role, catalyzes the radical-mediated insertion of two sulfur atoms into the C-6 and C-8 positions of the octanoyl moiety bound to the lipoyl domains of lipoate-dependent enzymes, thereby converting the octanoylated domains into lipoylated derivatives. This chain is Lipoyl synthase, found in Beutenbergia cavernae (strain ATCC BAA-8 / DSM 12333 / CCUG 43141 / JCM 11478 / NBRC 16432 / NCIMB 13614 / HKI 0122).